The following is a 188-amino-acid chain: UPF0157 protein VC_A0354 (188 aa).

This sequence belongs to the UPF0157 (GrpB) family.

In Vibrio cholerae serotype O1 (strain ATCC 39315 / El Tor Inaba N16961), this protein is UPF0157 protein VC_A0354.